The sequence spans 463 residues: Chaperone SurA (463 aa).

Residues M1–A25 form the signal peptide. 2 PpiC domains span residues G174–E276 and L289–G388. 2 disordered regions span residues A329–G348 and G434–R463. Residues D440–A452 show a composition bias toward low complexity. The span at A453–R463 shows a compositional bias: pro residues.

It is found in the periplasm. It carries out the reaction [protein]-peptidylproline (omega=180) = [protein]-peptidylproline (omega=0). Functionally, chaperone involved in the correct folding and assembly of outer membrane proteins. Recognizes specific patterns of aromatic residues and the orientation of their side chains, which are found more frequently in integral outer membrane proteins. May act in both early periplasmic and late outer membrane-associated steps of protein maturation. The protein is Chaperone SurA of Xanthomonas campestris pv. campestris (strain 8004).